Consider the following 300-residue polypeptide: Large ribosomal subunit protein bL9m (300 aa).

This sequence belongs to the bacterial ribosomal protein bL9 family. As to quaternary structure, component of the mitochondrial large ribosomal subunit (mt-LSU). Mature N.crassa 74S mitochondrial ribosomes consist of a small (37S) and a large (54S) subunit. The 37S small subunit contains a 16S ribosomal RNA (16S mt-rRNA) and 32 different proteins. The 54S large subunit contains a 23S rRNA (23S mt-rRNA) and 42 different proteins.

The protein resides in the mitochondrion. Functionally, component of the mitochondrial ribosome (mitoribosome), a dedicated translation machinery responsible for the synthesis of mitochondrial genome-encoded proteins, including at least some of the essential transmembrane subunits of the mitochondrial respiratory chain. The mitoribosomes are attached to the mitochondrial inner membrane and translation products are cotranslationally integrated into the membrane. This Neurospora crassa (strain ATCC 24698 / 74-OR23-1A / CBS 708.71 / DSM 1257 / FGSC 987) protein is Large ribosomal subunit protein bL9m (mrpl50).